Consider the following 923-residue polypeptide: Glucosidase 2 subunit alpha (923 aa).

Residues 1 to 25 (MRYHGICWFIFQAAIIFAIFGSCQG) form the signal peptide. Asparagine 262 is a glycosylation site (N-linked (GlcNAc...) asparagine). Catalysis depends on aspartate 524, which acts as the Nucleophile. Residue glutamate 527 is part of the active site. A glycan (N-linked (GlcNAc...) asparagine) is linked at asparagine 563. Aspartate 600 (proton donor) is an active-site residue. A glycan (N-linked (GlcNAc...) asparagine) is linked at asparagine 822.

The protein belongs to the glycosyl hydrolase 31 family. In terms of assembly, heterodimer of a catalytic subunit alpha (gls2) and a subunit beta (gtb1).

It localises to the endoplasmic reticulum. It catalyses the reaction N(4)-(alpha-D-Glc-(1-&gt;3)-alpha-D-Man-(1-&gt;2)-alpha-D-Man-(1-&gt;2)-alpha-D-Man-(1-&gt;3)-[alpha-D-Man-(1-&gt;2)-alpha-D-Man-(1-&gt;3)-[alpha-D-Man-(1-&gt;2)-alpha-D-Man-(1-&gt;6)]-alpha-D-Man-(1-&gt;6)]-beta-D-Man-(1-&gt;4)-beta-D-GlcNAc-(1-&gt;4)-beta-D-GlcNAc)-L-asparaginyl-[protein] + H2O = N(4)-(alpha-D-Man-(1-&gt;2)-alpha-D-Man-(1-&gt;2)-alpha-D-Man-(1-&gt;3)-[alpha-D-Man-(1-&gt;2)-alpha-D-Man-(1-&gt;3)-[alpha-D-Man-(1-&gt;2)-alpha-D-Man-(1-&gt;6)]-alpha-D-Man-(1-&gt;6)]-beta-D-Man-(1-&gt;4)-beta-D-GlcNAc-(1-&gt;4)-beta-D-GlcNAc)-L-asparaginyl-[protein] (N-glucan mannose isomer 9A1,2,3B1,2,3) + beta-D-glucose. It carries out the reaction N(4)-(alpha-D-Glc-(1-&gt;3)-alpha-D-Glc-(1-&gt;3)-alpha-D-Man-(1-&gt;2)-alpha-D-Man-(1-&gt;2)-alpha-D-Man-(1-&gt;3)-[alpha-D-Man-(1-&gt;2)-alpha-D-Man-(1-&gt;3)-[alpha-D-Man-(1-&gt;2)-alpha-D-Man-(1-&gt;6)]-alpha-D-Man-(1-&gt;6)]-beta-D-Man-(1-&gt;4)-beta-D-GlcNAc-(1-&gt;4)-beta-D-GlcNAc)-L-asparaginyl-[protein] + H2O = N(4)-(alpha-D-Glc-(1-&gt;3)-alpha-D-Man-(1-&gt;2)-alpha-D-Man-(1-&gt;2)-alpha-D-Man-(1-&gt;3)-[alpha-D-Man-(1-&gt;2)-alpha-D-Man-(1-&gt;3)-[alpha-D-Man-(1-&gt;2)-alpha-D-Man-(1-&gt;6)]-alpha-D-Man-(1-&gt;6)]-beta-D-Man-(1-&gt;4)-beta-D-GlcNAc-(1-&gt;4)-beta-D-GlcNAc)-L-asparaginyl-[protein] + beta-D-glucose. It functions in the pathway glycan metabolism; N-glycan metabolism. Its function is as follows. Catalytic subunit of glucosidase 2, which cleaves sequentially the 2 innermost alpha-1,3-linked glucose residues from the Glc(2)Man(9)GlcNAc(2) oligosaccharide precursor of immature glycoproteins. The sequence is that of Glucosidase 2 subunit alpha from Schizosaccharomyces pombe (strain 972 / ATCC 24843) (Fission yeast).